A 912-amino-acid chain; its full sequence is Protein translocase subunit SecA (912 aa).

Residues Q87, 105 to 109 (GEGKT), and D508 each bind ATP. Residues 855-912 (QHQDAGGYGADEEVEQMQGGNAPVPVSQVTRDEPKVGRNDPCPCGSGKKYKHCHGQLS) form a disordered region. Zn(2+)-binding residues include C896, C898, C907, and H908. Residues 902–912 (KKYKHCHGQLS) show a composition bias toward basic residues.

This sequence belongs to the SecA family. Monomer and homodimer. Part of the essential Sec protein translocation apparatus which comprises SecA, SecYEG and auxiliary proteins SecDF-YajC and YidC. The cofactor is Zn(2+).

The protein resides in the cell inner membrane. It localises to the cytoplasm. The enzyme catalyses ATP + H2O + cellular proteinSide 1 = ADP + phosphate + cellular proteinSide 2.. Part of the Sec protein translocase complex. Interacts with the SecYEG preprotein conducting channel. Has a central role in coupling the hydrolysis of ATP to the transfer of proteins into and across the cell membrane, serving both as a receptor for the preprotein-SecB complex and as an ATP-driven molecular motor driving the stepwise translocation of polypeptide chains across the membrane. This is Protein translocase subunit SecA from Xanthomonas campestris pv. campestris (strain 8004).